A 354-amino-acid polypeptide reads, in one-letter code: Cysteine proteinase 1 (354 aa).

Residues 1-24 (MARRNPLLFAIVVTILFVVCYGSA) form the signal peptide. A propeptide spans 25–125 (LIAQTPPPVD…HKEDVHVDDS (101 aa)) (activation peptide). 3 cysteine pairs are disulfide-bonded: cysteine 150-cysteine 191, cysteine 184-cysteine 229, and cysteine 282-cysteine 330. Cysteine 153 is an active-site residue. Residue asparagine 208 is glycosylated (N-linked (GlcNAc...) asparagine). Catalysis depends on residues histidine 289 and asparagine 309.

The protein belongs to the peptidase C1 family.

Its function is as follows. The cysteine proteinases have a potential role in host-parasite interaction and virulence. In Leishmania pifanoi, this protein is Cysteine proteinase 1 (CYS1).